The primary structure comprises 398 residues: Phytoene synthase, chloroplastic (398 aa).

It belongs to the phytoene/squalene synthase family. As to quaternary structure, monomer.

Its subcellular location is the plastid. The protein resides in the chloroplast. It catalyses the reaction 2 (2E,6E,10E)-geranylgeranyl diphosphate = 15-cis-phytoene + 2 diphosphate. It functions in the pathway carotenoid biosynthesis; phytoene biosynthesis; all-trans-phytoene from geranylgeranyl diphosphate: step 1/1. In terms of biological role, catalyzes the reaction from prephytoene diphosphate to phytoene. This Daucus carota (Wild carrot) protein is Phytoene synthase, chloroplastic (PSY).